Consider the following 160-residue polypeptide: tRNA (cytidine(34)-2'-O)-methyltransferase (160 aa).

S-adenosyl-L-methionine-binding residues include Leu78, Gly100, Ile120, and Ser128.

This sequence belongs to the class IV-like SAM-binding methyltransferase superfamily. RNA methyltransferase TrmH family. TrmL subfamily. In terms of assembly, homodimer.

It is found in the cytoplasm. It catalyses the reaction cytidine(34) in tRNA + S-adenosyl-L-methionine = 2'-O-methylcytidine(34) in tRNA + S-adenosyl-L-homocysteine + H(+). The enzyme catalyses 5-carboxymethylaminomethyluridine(34) in tRNA(Leu) + S-adenosyl-L-methionine = 5-carboxymethylaminomethyl-2'-O-methyluridine(34) in tRNA(Leu) + S-adenosyl-L-homocysteine + H(+). Methylates the ribose at the nucleotide 34 wobble position in the two leucyl isoacceptors tRNA(Leu)(CmAA) and tRNA(Leu)(cmnm5UmAA). Catalyzes the methyl transfer from S-adenosyl-L-methionine to the 2'-OH of the wobble nucleotide. The polypeptide is tRNA (cytidine(34)-2'-O)-methyltransferase (Beijerinckia indica subsp. indica (strain ATCC 9039 / DSM 1715 / NCIMB 8712)).